We begin with the raw amino-acid sequence, 135 residues long: Large ribosomal subunit protein uL16c (135 aa).

It belongs to the universal ribosomal protein uL16 family. In terms of assembly, part of the 50S ribosomal subunit.

Its subcellular location is the plastid. It localises to the chloroplast. The protein is Large ribosomal subunit protein uL16c of Coffea arabica (Arabian coffee).